A 141-amino-acid polypeptide reads, in one-letter code: Nucleoside diphosphate kinase (141 aa).

ATP is bound by residues lysine 11, phenylalanine 59, arginine 87, threonine 93, arginine 104, and asparagine 114. The Pros-phosphohistidine intermediate role is filled by histidine 117.

The protein belongs to the NDK family. As to quaternary structure, homotetramer. It depends on Mg(2+) as a cofactor.

Its subcellular location is the cytoplasm. It catalyses the reaction a 2'-deoxyribonucleoside 5'-diphosphate + ATP = a 2'-deoxyribonucleoside 5'-triphosphate + ADP. The enzyme catalyses a ribonucleoside 5'-diphosphate + ATP = a ribonucleoside 5'-triphosphate + ADP. In terms of biological role, major role in the synthesis of nucleoside triphosphates other than ATP. The ATP gamma phosphate is transferred to the NDP beta phosphate via a ping-pong mechanism, using a phosphorylated active-site intermediate. The chain is Nucleoside diphosphate kinase from Nitrosomonas europaea (strain ATCC 19718 / CIP 103999 / KCTC 2705 / NBRC 14298).